A 320-amino-acid polypeptide reads, in one-letter code: Malate dehydrogenase (320 aa).

NAD(+)-binding positions include 10-15 and Asp34; that span reads GSGMIG. Substrate is bound by residues Arg83 and Arg89. NAD(+) is bound by residues Asn96 and 119 to 121; that span reads ITN. Asn121 and Arg152 together coordinate substrate. Residue His176 is the Proton acceptor of the active site.

The protein belongs to the LDH/MDH superfamily. MDH type 3 family.

The enzyme catalyses (S)-malate + NAD(+) = oxaloacetate + NADH + H(+). In terms of biological role, catalyzes the reversible oxidation of malate to oxaloacetate. This Bartonella henselae (strain ATCC 49882 / DSM 28221 / CCUG 30454 / Houston 1) (Rochalimaea henselae) protein is Malate dehydrogenase.